Reading from the N-terminus, the 110-residue chain is Auxin-responsive protein SAUR71 (110 aa).

It belongs to the ARG7 family. Highly expressed in the steles of roots and hypocotyls.

Its subcellular location is the cytoplasm. Functionally, plays a role in the regulation of cell expansion, root meristem patterning and auxin transport. This Arabidopsis thaliana (Mouse-ear cress) protein is Auxin-responsive protein SAUR71.